Consider the following 347-residue polypeptide: Bifunctional methylenetetrahydrofolate dehydrogenase/cyclohydrolase 2, mitochondrial (347 aa).

Substrate is bound by residues 98–102 (YVRNK) and 145–147 (VQL). NAD(+) contacts are provided by residues 214-216 (GRS) and arginine 247. 323-327 (PGGVG) is a substrate binding site.

The protein belongs to the tetrahydrofolate dehydrogenase/cyclohydrolase family. Requires Mg(2+) as cofactor.

It localises to the mitochondrion inner membrane. It catalyses the reaction (6R)-5,10-methylene-5,6,7,8-tetrahydrofolate + NAD(+) = (6R)-5,10-methenyltetrahydrofolate + NADH. The enzyme catalyses (6R)-5,10-methenyltetrahydrofolate + H2O = (6R)-10-formyltetrahydrofolate + H(+). It carries out the reaction (6R)-5,10-methylene-5,6,7,8-tetrahydrofolate + NADP(+) = (6R)-5,10-methenyltetrahydrofolate + NADPH. The protein operates within one-carbon metabolism; tetrahydrofolate interconversion. In terms of biological role, bifunctional mitochondrial folate-interconverting enzyme that has both NAD/NADP-dependent methylenetetrahydrofolate dehydrogenase and methenyltetrahydrofolate cyclohydrolase activities. The sequence is that of Bifunctional methylenetetrahydrofolate dehydrogenase/cyclohydrolase 2, mitochondrial from Callithrix jacchus (White-tufted-ear marmoset).